Reading from the N-terminus, the 518-residue chain is Subtilisin-like protease 1 (518 aa).

An N-terminal signal peptide occupies residues 1 to 19 (MGVFRFISISLAAVSAANA). Residues 20-116 (AQILSMPHAQ…VEPDTIISVH (97 aa)) constitute a propeptide that is removed on maturation. The Inhibitor I9 domain occupies 34–115 (SYIVMMKDDT…FVEPDTIISV (82 aa)). The Peptidase S8 domain maps to 126–400 (SWGLARISNP…NVLINNGGAK (275 aa)). Residues Asp-158 and His-190 each act as charge relay system in the active site. Residues 175–198 (GSNQVNDGDDRDGSGHGTHTSGTM) form a disordered region. N-linked (GlcNAc...) asparagine glycans are attached at residues Asn-233 and Asn-251. Residues 282–294 (NDNQDAQSSSPAS) are compositionally biased toward polar residues. The tract at residues 282–312 (NDNQDAQSSSPASEPSVCTVGSSAEDDSRSS) is disordered. Catalysis depends on Ser-345, which acts as the Charge relay system. Polar residues predominate over residues 378–394 (TSSITDAGPGTPTNVLI). The interval 378-496 (TSSITDAGPG…PYPGGDNFDF (119 aa)) is disordered. Composition is skewed to pro residues over residues 405–470 (NPNP…PGEP) and 478–487 (APAPQHPHTP).

It belongs to the peptidase S8 family.

The protein localises to the secreted. Its function is as follows. Secreted subtilisin-like serine protease with keratinolytic activity that contributes to pathogenicity. This is Subtilisin-like protease 1 (SUB1) from Trichophyton verrucosum (strain HKI 0517).